A 451-amino-acid chain; its full sequence is Tetraspanin-14 (451 aa).

At 1 to 56 (MPHRAPRRFMKTAPGACDWEQCLLMGSGEPTRARAVVSSSHKQRKPRQEISACLKW) the chain is on the cytoplasmic side. A Basolateral membrane targeting motif is present at residues 20–24 (EQCLL). A helical membrane pass occupies residues 57–77 (LVFLLNSIVFLVGVGILALGV). Residues 78–96 (YLFIKDFREVKLVDIILNP) lie on the Extracellular side of the membrane. The chain crosses the membrane as a helical span at residues 97–117 (AILISIFGFSICVVSFFGFMG). Residues 118 to 130 (ALRDNIFLLKCFA) lie on the Cytoplasmic side of the membrane. Residues 131 to 151 (ACVFLSYILVVAVTLVFFTLF) traverse the membrane as a helical segment. At 152–285 (YTDTTEGLSA…QPLRTLFESH (134 aa)) the chain is on the extracellular side. 2 N-linked (GlcNAc...) asparagine glycosylation sites follow: asparagine 205 and asparagine 211. A helical membrane pass occupies residues 286–306 (AVHVGAFVALLIVPVCISVCL). Residues 307-451 (TNILAKQVDH…TDLVPQKSKS (145 aa)) are Cytoplasmic-facing. Residues 328–451 (NDRRRKRDHN…TDLVPQKSKS (124 aa)) form a disordered region. The segment covering 366–376 (PDIPPPLPPIE) has biased composition (pro residues). Residues 410-434 (ATTTRTPPAAAGPAPTPQATTTNRT) show a composition bias toward low complexity. Residues 435 to 444 (HQWVLQQTDL) are compositionally biased toward polar residues.

The protein belongs to the tetraspanin (TM4SF) family. As to expression, expressed in the germline, particularly in sperm cells. Expressed in the germline (particularly in sperm cells), anterior sensory cilia, hypodermis and vulva (at protein level). In terms of tissue distribution, expressed in the pharynx, hypodermis and vulva (at protein level).

The protein resides in the cell membrane. Its subcellular location is the cytoplasmic vesicle membrane. The protein localises to the endosome membrane. It is found in the early endosome membrane. It localises to the late endosome membrane. The protein resides in the recycling endosome membrane. Its subcellular location is the apical cell membrane. The protein localises to the basolateral cell membrane. Functions redundantly with tsp-12 to regulate cell surface levels of the BMP type II receptor daf-4 (but not BMP type I receptor sma-6), probably by regulating endosomal sorting and recycling of receptors, preventing their targeting to degradative lysosomes. Together with tsp-12, regulates cell fate specification in the postembryonic mesodermal M lineage, body size, male development and vulva development, probably by positively modulating BMP-like Sma/Mab signaling. Together with tsp-12 involved in maintaining the structural and functional integrity of the endosomal network. Together with tsp-12, probably acts by modulating the activation of glp-1, Notch-like receptor, to regulate germline maturation. Functionally, functions redundantly with tsp-12 to regulate cell fate specification in the postembryonic mesodermal M lineage, body size, embryonic and vulva development. In terms of biological role, functions redundantly with tsp-12 to regulate cell fate specification in the postembryonic mesodermal M lineage. Likely plays a complementary role in mesodermal development with tsp-14 isoform a, but may be more critical. The sequence is that of Tetraspanin-14 from Caenorhabditis elegans.